Consider the following 157-residue polypeptide: Protein Smg homolog (157 aa).

This sequence belongs to the Smg family.

This Shewanella halifaxensis (strain HAW-EB4) protein is Protein Smg homolog.